Reading from the N-terminus, the 873-residue chain is Nitrate reductase [NADPH] (873 aa).

The interval 30–61 (TELDTADIPLPPPSKEPTEVLSLDKTTPDSHV) is disordered. Mo-molybdopterin is bound at residue Cys-150. In terms of domain architecture, Cytochrome b5 heme-binding spans 512–587 (TRIIDLEEFK…MPDYHIGTLD (76 aa)). Residues His-547 and His-570 each contribute to the heme site. One can recognise an FAD-binding FR-type domain in the interval 616–729 (KAWTKATLTK…KGPTGRFEYL (114 aa)). FAD contacts are provided by residues 672–675 (RSYT), 689–693 (LIKIY), 703–705 (KMT), and Thr-756. 843-852 (MVLVCGPEAM) is an NADP(+) binding site.

This sequence belongs to the nitrate reductase family. As to quaternary structure, homodimer. Requires FAD as cofactor. The cofactor is heme. Mo-molybdopterin is required as a cofactor.

The enzyme catalyses nitrite + NADP(+) + H2O = nitrate + NADPH + H(+). Functionally, nitrate reductase is a key enzyme involved in the first step of nitrate assimilation in plants, fungi and bacteria. This is Nitrate reductase [NADPH] (niaD) from Emericella nidulans (strain FGSC A4 / ATCC 38163 / CBS 112.46 / NRRL 194 / M139) (Aspergillus nidulans).